We begin with the raw amino-acid sequence, 145 residues long: UI (145 aa).

The N-terminal stretch at Met1 to Ser22 is a signal peptide. Val143 carries the post-translational modification Valine amide.

It belongs to the sauvagine/corticotropin-releasing factor/urotensin I family.

It is found in the secreted. In terms of biological role, urotensin is found in the teleost caudal neurosecretory system. It has a suggested role in osmoregulation and as a corticotropin-releasing factor. The non-hormonal portion of this precursor may be a urotensin binding protein, urophysin. The protein is UI of Carassius auratus (Goldfish).